We begin with the raw amino-acid sequence, 406 residues long: NADH-ubiquinone oxidoreductase 49 kDa subunit (406 aa).

It belongs to the complex I 49 kDa subunit family. In terms of assembly, complex I is composed of 45 different subunits. Component of the iron-sulfur (IP) fragment of the enzyme.

The protein resides in the mitochondrion inner membrane. The catalysed reaction is a ubiquinone + NADH + 5 H(+)(in) = a ubiquinol + NAD(+) + 4 H(+)(out). Core subunit of the mitochondrial membrane respiratory chain NADH dehydrogenase (Complex I) that is believed to belong to the minimal assembly required for catalysis. Complex I functions in the transfer of electrons from NADH to the respiratory chain. The immediate electron acceptor for the enzyme is believed to be ubiquinone. The chain is NADH-ubiquinone oxidoreductase 49 kDa subunit (nad7) from Dictyostelium citrinum (Slime mold).